Consider the following 353-residue polypeptide: N-methyltransferase (353 aa).

5 residues coordinate S-adenosyl-L-homocysteine: serine 171, alanine 195, aspartate 218, aspartate 238, and lysine 252. Aspartate 218 lines the S-adenosyl-L-methionine pocket.

Belongs to the class I-like SAM-binding methyltransferase superfamily. Cation-independent O-methyltransferase family. Homodimer. In terms of tissue distribution, expressed at high levels in all tissues.

It catalyses the reaction 3-methoxytyramine + S-adenosyl-L-methionine = N-methyl-3-methoxytyramine + S-adenosyl-L-homocysteine + H(+). The catalysed reaction is mescaline + S-adenosyl-L-methionine = N-methylmescaline + S-adenosyl-L-homocysteine + H(+). The enzyme catalyses tyramine + S-adenosyl-L-methionine = N-methyltyramine + S-adenosyl-L-homocysteine + H(+). It carries out the reaction 4-hydroxy-3,5-dimethoxyphenethylamine + S-adenosyl-L-methionine = N-methyl-4-hydroxy-3,5-dimethoxyphenethylamine + S-adenosyl-L-homocysteine + H(+). The protein operates within aromatic compound metabolism. Its pathway is alkaloid biosynthesis. Functionally, N-methyltransferase participating in the biosynthesis of natural products derived from phenylethylamine, including mescaline, a natural hallucinogen potentially used in psychotherapeutic treatments. Catalyzes the N-methylation of many substrates, including 3-methoxytyramine, 5-hydroxy-3,4-dimethoxyphenethylamine, 4-hydroxy-3,5-dimethoxyphenethylamine, tyramine and mescaline. The sequence is that of N-methyltransferase from Lophophora williamsii (Peyote).